The chain runs to 430 residues: Pre-mRNA-processing protein 45 (430 aa).

The span at 1 to 26 shows a compositional bias: polar residues; it reads MSFRTLSSLLPSPQNSEVSESSAFSR. Disordered stretches follow at residues 1-28, 280-299, and 370-430; these read MSFR…SRQS, MERN…NKMS, and PTTG…PHTS.

Belongs to the SNW family. As to quaternary structure, associated with the spliceosome.

The protein localises to the nucleus. In terms of biological role, involved in pre-mRNA splicing. This Kluyveromyces lactis (strain ATCC 8585 / CBS 2359 / DSM 70799 / NBRC 1267 / NRRL Y-1140 / WM37) (Yeast) protein is Pre-mRNA-processing protein 45 (PRP45).